A 384-amino-acid polypeptide reads, in one-letter code: Succinyl-diaminopimelate desuccinylase (384 aa).

H71 serves as a coordination point for Zn(2+). The active site involves D73. Position 104 (D104) interacts with Zn(2+). E139 acts as the Proton acceptor in catalysis. E140, E168, and H357 together coordinate Zn(2+).

This sequence belongs to the peptidase M20A family. DapE subfamily. As to quaternary structure, homodimer. Zn(2+) serves as cofactor. Requires Co(2+) as cofactor.

The enzyme catalyses N-succinyl-(2S,6S)-2,6-diaminopimelate + H2O = (2S,6S)-2,6-diaminopimelate + succinate. It participates in amino-acid biosynthesis; L-lysine biosynthesis via DAP pathway; LL-2,6-diaminopimelate from (S)-tetrahydrodipicolinate (succinylase route): step 3/3. In terms of biological role, catalyzes the hydrolysis of N-succinyl-L,L-diaminopimelic acid (SDAP), forming succinate and LL-2,6-diaminopimelate (DAP), an intermediate involved in the bacterial biosynthesis of lysine and meso-diaminopimelic acid, an essential component of bacterial cell walls. This chain is Succinyl-diaminopimelate desuccinylase, found in Afipia carboxidovorans (strain ATCC 49405 / DSM 1227 / KCTC 32145 / OM5) (Oligotropha carboxidovorans).